Reading from the N-terminus, the 822-residue chain is Putative ESX-1 scaffolding and assembly protein SaeB (822 aa).

Functionally, may be involved in assembly of the ESX-1 / type VII specialized secretion system (T7SS), which exports several proteins including EsxA and EsxB. Involved in DNA conjugation in recipient (MDK8) but not donor (mc(2)155) strain. The polypeptide is Putative ESX-1 scaffolding and assembly protein SaeB (Mycolicibacterium smegmatis (strain ATCC 700084 / mc(2)155) (Mycobacterium smegmatis)).